The following is a 278-amino-acid chain: Glutamate racemase (278 aa).

Residues 13-14 (DS) and 45-46 (YG) contribute to the substrate site. C76 (proton donor/acceptor) is an active-site residue. A substrate-binding site is contributed by 77–78 (NT). Catalysis depends on C185, which acts as the Proton donor/acceptor. 186 to 187 (TH) is a binding site for substrate.

It belongs to the aspartate/glutamate racemases family.

It carries out the reaction L-glutamate = D-glutamate. It participates in cell wall biogenesis; peptidoglycan biosynthesis. Its function is as follows. Provides the (R)-glutamate required for cell wall biosynthesis. In Gloeothece citriformis (strain PCC 7424) (Cyanothece sp. (strain PCC 7424)), this protein is Glutamate racemase.